The chain runs to 126 residues: Small ribosomal subunit protein uS12 (126 aa).

The segment at 1–28 (MPTINQLVRKGRQSETTKSKSPALQDCP) is disordered. Asp-89 is modified (3-methylthioaspartic acid). The interval 103 to 126 (DTQGVKDRKQARSKYGAKRAKAGK) is disordered. Basic residues predominate over residues 113 to 126 (ARSKYGAKRAKAGK).

It belongs to the universal ribosomal protein uS12 family. As to quaternary structure, part of the 30S ribosomal subunit. Contacts proteins S8 and S17. May interact with IF1 in the 30S initiation complex.

With S4 and S5 plays an important role in translational accuracy. In terms of biological role, interacts with and stabilizes bases of the 16S rRNA that are involved in tRNA selection in the A site and with the mRNA backbone. Located at the interface of the 30S and 50S subunits, it traverses the body of the 30S subunit contacting proteins on the other side and probably holding the rRNA structure together. The combined cluster of proteins S8, S12 and S17 appears to hold together the shoulder and platform of the 30S subunit. The polypeptide is Small ribosomal subunit protein uS12 (Paraburkholderia phytofirmans (strain DSM 17436 / LMG 22146 / PsJN) (Burkholderia phytofirmans)).